Consider the following 446-residue polypeptide: Protein odr-4 homolog (446 aa).

A helical transmembrane segment spans residues 76 to 96 (ASQVGRMLPGGLMVLGVFLMT). Residues 394 to 415 (HPEKRESEPASQHLESKPENKA) show a composition bias toward basic and acidic residues. The interval 394 to 417 (HPEKRESEPASQHLESKPENKARS) is disordered. Residues 426 to 446 (GLVISTIVASIAIIISFYYIM) traverse the membrane as a helical segment.

This sequence belongs to the ODR-4 family.

Its subcellular location is the membrane. May play a role in the trafficking of a subset of G-protein coupled receptors. In Xenopus laevis (African clawed frog), this protein is Protein odr-4 homolog (odr4).